A 287-amino-acid chain; its full sequence is MAGAKEIRTKIASVQNTQKITKAMEMVAASKMRKTQDRMAASRPYAETIRSVIGHLALGNLEYKHPYLEERETKRVGYLVVSTDRGLCGGLNTNLFKKLLSEMKDWSDKDVQCELALIGSKATSFFASVGGNVVAQVTGMGDNPSLSELIGPVNIMLRAYDEGRLDKLYVVTNKFINTMSQEPTITQLLPLPAGDDETLKKKSWDYLYEPDPKALLDILLRRYVESQVYQGVVENLASEQAARMVAMKAATDNGGSLIKELQLVYNKARQASITQELTEIVSGASAV.

Belongs to the ATPase gamma chain family. F-type ATPases have 2 components, CF(1) - the catalytic core - and CF(0) - the membrane proton channel. CF(1) has five subunits: alpha(3), beta(3), gamma(1), delta(1), epsilon(1). CF(0) has three main subunits: a, b and c.

It localises to the cell inner membrane. Functionally, produces ATP from ADP in the presence of a proton gradient across the membrane. The gamma chain is believed to be important in regulating ATPase activity and the flow of protons through the CF(0) complex. This Photorhabdus laumondii subsp. laumondii (strain DSM 15139 / CIP 105565 / TT01) (Photorhabdus luminescens subsp. laumondii) protein is ATP synthase gamma chain.